The following is a 374-amino-acid chain: Cell division protein DivIB (374 aa).

Positions 1–90 are disordered; it reads MWKISNENDI…EEEHFADRLP (90 aa). Topologically, residues 1–103 are cytoplasmic; that stretch reads MWKISNENDI…KTRNKRLYRR (103 aa). Basic and acidic residues predominate over residues 39–53; the sequence is YLKKQAEEAASKGEN. The segment covering 56 to 75 has biased composition (polar residues); that stretch reads AEVTITLQEQSQEEPQQHLP. Residues 104-124 form a helical membrane-spanning segment; that stretch reads LAFILTCLGTAILVALYFVSP. Topologically, residues 125–374 are extracellular; the sequence is LSRLSEVTVS…GENQEVQQAE (250 aa). One can recognise a POTRA domain in the interval 126-197; the sequence is SRLSEVTVSG…NSFKIDIQEY (72 aa). The segment at 325-374 is disordered; that stretch reads KESEETGSEVSEDSAVENQEVVDPNAGVATDEANNGTPTNGENQEVQQAE. The segment covering 326-339 has biased composition (acidic residues); sequence ESEETGSEVSEDSA. Residues 356 to 374 show a composition bias toward polar residues; the sequence is EANNGTPTNGENQEVQQAE.

The protein belongs to the FtsQ/DivIB family. DivIB subfamily.

The protein resides in the cell membrane. Cell division protein that may be involved in stabilizing or promoting the assembly of the division complex. This chain is Cell division protein DivIB, found in Enterococcus faecalis (strain ATCC 700802 / V583).